Reading from the N-terminus, the 525-residue chain is Cysteine--tRNA ligase (525 aa).

Residue Cys49 participates in Zn(2+) binding. The 'HIGH' region signature appears at 51 to 61; it reads VTVYDLCHLGH. Zn(2+) is bound by residues Cys258, His283, and Glu287. The 'KMSKS' region signature appears at 315 to 319; that stretch reads KMSKS. Lys318 is an ATP binding site.

This sequence belongs to the class-I aminoacyl-tRNA synthetase family. Monomer. The cofactor is Zn(2+).

The protein localises to the cytoplasm. The catalysed reaction is tRNA(Cys) + L-cysteine + ATP = L-cysteinyl-tRNA(Cys) + AMP + diphosphate. This chain is Cysteine--tRNA ligase, found in Synechococcus sp. (strain JA-2-3B'a(2-13)) (Cyanobacteria bacterium Yellowstone B-Prime).